A 296-amino-acid chain; its full sequence is 6-hydroxypseudooxynicotine dehydrogenase complex subunit alpha (296 aa).

The region spanning methionine 1 to histidine 177 is the FAD-binding PCMH-type domain. Residues isoleucine 30 to leucine 37, threonine 111 to serine 115, and glutamate 124 contribute to the FAD site.

In terms of assembly, heterohexamer of 2 alpha (kdhA), 2 beta (kdhB) and 2 gamma (kdhC) subunit. Dimer of heterotrimers. It depends on FAD as a cofactor.

The enzyme catalyses 6-hydroxypseudooxynicotine + A + H2O = 2,6-dihydroxypseudooxynicotine + AH2. Its pathway is alkaloid degradation; nicotine degradation. Molybdo-flavoprotein enzyme complex involved in nicotine degradation. The subunit gamma (large subunit) contains the substrate-binding sites, the subunit alpha (medium subunit) binds FAD and the subunit beta (small subunit) has a 2Fe-2S ferredoxin-type domain which binds 2 2Fe-2S clusters. This chain is 6-hydroxypseudooxynicotine dehydrogenase complex subunit alpha (kdhA), found in Paenarthrobacter nicotinovorans (Arthrobacter nicotinovorans).